A 98-amino-acid chain; its full sequence is Small ribosomal subunit protein uS17 (98 aa).

It belongs to the universal ribosomal protein uS17 family. In terms of assembly, part of the 30S ribosomal subunit.

In terms of biological role, one of the primary rRNA binding proteins, it binds specifically to the 5'-end of 16S ribosomal RNA. The protein is Small ribosomal subunit protein uS17 of Synechococcus sp. (strain CC9605).